Reading from the N-terminus, the 177-residue chain is Large ribosomal subunit protein uL6 (177 aa).

Belongs to the universal ribosomal protein uL6 family. In terms of assembly, part of the 50S ribosomal subunit.

This protein binds to the 23S rRNA, and is important in its secondary structure. It is located near the subunit interface in the base of the L7/L12 stalk, and near the tRNA binding site of the peptidyltransferase center. This chain is Large ribosomal subunit protein uL6, found in Sphingopyxis alaskensis (strain DSM 13593 / LMG 18877 / RB2256) (Sphingomonas alaskensis).